The chain runs to 206 residues: N-(5'-phosphoribosyl)anthranilate isomerase (206 aa).

This sequence belongs to the TrpF family.

It carries out the reaction N-(5-phospho-beta-D-ribosyl)anthranilate = 1-(2-carboxyphenylamino)-1-deoxy-D-ribulose 5-phosphate. The protein operates within amino-acid biosynthesis; L-tryptophan biosynthesis; L-tryptophan from chorismate: step 3/5. The chain is N-(5'-phosphoribosyl)anthranilate isomerase from Pseudomonas putida (strain W619).